A 439-amino-acid polypeptide reads, in one-letter code: Protein translocase subunit SecY (439 aa).

Helical transmembrane passes span 23–43 (IASV…PIPG), 77–97 (IFAL…LLTL), 125–145 (LVLA…ISGM), 154–174 (FYFY…LMWL), 187–207 (ISII…VHTI), 217–237 (ILLF…VVFI), 274–294 (VIPA…ISWF), 317–337 (YLIL…GLVF), 369–389 (IMIR…LIPE), and 397–417 (VPFY…MDFI).

The protein belongs to the SecY/SEC61-alpha family. As to quaternary structure, component of the Sec protein translocase complex. Heterotrimer consisting of SecY, SecE and SecG subunits. The heterotrimers can form oligomers, although 1 heterotrimer is thought to be able to translocate proteins. Interacts with the ribosome. Interacts with SecDF, and other proteins may be involved. Interacts with SecA.

The protein localises to the cell membrane. In terms of biological role, the central subunit of the protein translocation channel SecYEG. Consists of two halves formed by TMs 1-5 and 6-10. These two domains form a lateral gate at the front which open onto the bilayer between TMs 2 and 7, and are clamped together by SecE at the back. The channel is closed by both a pore ring composed of hydrophobic SecY resides and a short helix (helix 2A) on the extracellular side of the membrane which forms a plug. The plug probably moves laterally to allow the channel to open. The ring and the pore may move independently. This Buchnera aphidicola subsp. Schizaphis graminum (strain Sg) protein is Protein translocase subunit SecY.